A 200-amino-acid chain; its full sequence is NADH-quinone oxidoreductase subunit B (200 aa).

[4Fe-4S] cluster is bound by residues Cys78, Cys79, Cys144, and Cys174.

This sequence belongs to the complex I 20 kDa subunit family. NDH-1 is composed of 14 different subunits. Subunits NuoB, C, D, E, F, and G constitute the peripheral sector of the complex. The cofactor is [4Fe-4S] cluster.

It localises to the cell membrane. The catalysed reaction is a quinone + NADH + 5 H(+)(in) = a quinol + NAD(+) + 4 H(+)(out). NDH-1 shuttles electrons from NADH, via FMN and iron-sulfur (Fe-S) centers, to quinones in the respiratory chain. The immediate electron acceptor for the enzyme in this species is believed to be ubiquinone. Couples the redox reaction to proton translocation (for every two electrons transferred, four hydrogen ions are translocated across the cytoplasmic membrane), and thus conserves the redox energy in a proton gradient. The sequence is that of NADH-quinone oxidoreductase subunit B from Dehalococcoides mccartyi (strain ATCC BAA-2100 / JCM 16839 / KCTC 5957 / BAV1).